The sequence spans 159 residues: MSQLTHFDNAGQAHMVDVGNKANTHRVAVATGTITMLPATFALVRDGSAKKGDVLGIARVAAIMATKRTADLIPLCHPIGLTKVAVDFALDEPSSTIACIVRTETHGQTGVEMEALTGVQVALLTIYDMCKAVDRGMVMGNVKLLEKHGGKSGDWVAGA.

Residues 75–77 and 113–114 contribute to the substrate site; these read LCH and ME. The active site involves Asp-128.

The protein belongs to the MoaC family. Homohexamer; trimer of dimers.

The enzyme catalyses (8S)-3',8-cyclo-7,8-dihydroguanosine 5'-triphosphate = cyclic pyranopterin phosphate + diphosphate. It functions in the pathway cofactor biosynthesis; molybdopterin biosynthesis. In terms of biological role, catalyzes the conversion of (8S)-3',8-cyclo-7,8-dihydroguanosine 5'-triphosphate to cyclic pyranopterin monophosphate (cPMP). This chain is Cyclic pyranopterin monophosphate synthase, found in Cupriavidus metallidurans (strain ATCC 43123 / DSM 2839 / NBRC 102507 / CH34) (Ralstonia metallidurans).